We begin with the raw amino-acid sequence, 252 residues long: Imidazole glycerol phosphate synthase subunit HisF (252 aa).

Catalysis depends on residues Asp-11 and Asp-130.

Belongs to the HisA/HisF family. As to quaternary structure, heterodimer of HisH and HisF.

It is found in the cytoplasm. The enzyme catalyses 5-[(5-phospho-1-deoxy-D-ribulos-1-ylimino)methylamino]-1-(5-phospho-beta-D-ribosyl)imidazole-4-carboxamide + L-glutamine = D-erythro-1-(imidazol-4-yl)glycerol 3-phosphate + 5-amino-1-(5-phospho-beta-D-ribosyl)imidazole-4-carboxamide + L-glutamate + H(+). It functions in the pathway amino-acid biosynthesis; L-histidine biosynthesis; L-histidine from 5-phospho-alpha-D-ribose 1-diphosphate: step 5/9. IGPS catalyzes the conversion of PRFAR and glutamine to IGP, AICAR and glutamate. The HisF subunit catalyzes the cyclization activity that produces IGP and AICAR from PRFAR using the ammonia provided by the HisH subunit. This chain is Imidazole glycerol phosphate synthase subunit HisF, found in Paramagnetospirillum magneticum (strain ATCC 700264 / AMB-1) (Magnetospirillum magneticum).